The sequence spans 647 residues: Threonine--tRNA ligase (647 aa).

The TGS domain occupies 1-61 (MIKITFPDGA…EEDGSIEIVT (61 aa)). The tract at residues 240–538 (DHRKLGKELD…LIETYKGAFP (299 aa)) is catalytic. Positions 334, 385, and 515 each coordinate Zn(2+).

This sequence belongs to the class-II aminoacyl-tRNA synthetase family. Homodimer. Zn(2+) serves as cofactor.

It is found in the cytoplasm. It carries out the reaction tRNA(Thr) + L-threonine + ATP = L-threonyl-tRNA(Thr) + AMP + diphosphate + H(+). Catalyzes the attachment of threonine to tRNA(Thr) in a two-step reaction: L-threonine is first activated by ATP to form Thr-AMP and then transferred to the acceptor end of tRNA(Thr). Also edits incorrectly charged L-seryl-tRNA(Thr). The polypeptide is Threonine--tRNA ligase (Streptococcus pyogenes serotype M28 (strain MGAS6180)).